Reading from the N-terminus, the 540-residue chain is Putative cysteine ligase BshC (540 aa).

A coiled-coil region spans residues 457–477 (EKNRAFIQGQIAFLKERMERE).

It belongs to the BshC family.

Involved in bacillithiol (BSH) biosynthesis. May catalyze the last step of the pathway, the addition of cysteine to glucosamine malate (GlcN-Mal) to generate BSH. This is Putative cysteine ligase BshC from Shouchella clausii (strain KSM-K16) (Alkalihalobacillus clausii).